The sequence spans 394 residues: Teichoic acid poly(glycerol phosphate) polymerase (394 aa).

The protein belongs to the CDP-glycerol glycerophosphotransferase family.

The protein resides in the cell membrane. It catalyses the reaction 4-O-[(2R)-glycerylphospho]-N-acetyl-beta-D-mannosaminyl-(1-&gt;4)-N-acetyl-alpha-D-glucosaminyl di-trans,octa-cis-undecaprenyl diphosphate + n CDP-glycerol = 4-O-{[(2R)-1-glycerylphospho](n)-(2R)-1-glycerylphospho}-N-acetyl-beta-D-mannosaminyl-(1-&gt;4)-N-acetyl-alpha-D-glucosaminyl undecaprenyl diphosphate + n CMP + n H(+). Its function is as follows. Catalyzes the addition of further 2-8 glycerol phosphate units from CDP-glycerol to the single glycerol phosphate unit bound to the prenolpyrophosphate-linked disaccharide. The function in the cell is unknown since the product is not part of the poly(ribitol phosphate) teichoic acid found in the cell walls. In Bacillus spizizenii (strain ATCC 23059 / NRRL B-14472 / W23) (Bacillus subtilis subsp. spizizenii), this protein is Teichoic acid poly(glycerol phosphate) polymerase (tarF).